We begin with the raw amino-acid sequence, 213 residues long: 3-dehydroquinate dehydratase (213 aa).

Residues 27–29 (EVR) and arginine 53 contribute to the 3-dehydroquinate site. The active-site Proton donor/acceptor is histidine 111. Residue lysine 138 is the Schiff-base intermediate with substrate of the active site. The 3-dehydroquinate site is built by arginine 175 and glutamine 197.

It belongs to the type-I 3-dehydroquinase family. As to quaternary structure, homodimer.

It carries out the reaction 3-dehydroquinate = 3-dehydroshikimate + H2O. Its pathway is metabolic intermediate biosynthesis; chorismate biosynthesis; chorismate from D-erythrose 4-phosphate and phosphoenolpyruvate: step 3/7. Functionally, involved in the third step of the chorismate pathway, which leads to the biosynthesis of aromatic amino acids. Catalyzes the cis-dehydration of 3-dehydroquinate (DHQ) and introduces the first double bond of the aromatic ring to yield 3-dehydroshikimate. This Thermococcus gammatolerans (strain DSM 15229 / JCM 11827 / EJ3) protein is 3-dehydroquinate dehydratase.